Reading from the N-terminus, the 449-residue chain is Putative transporter C83.11 (449 aa).

9 helical membrane passes run 7 to 27 (LSHI…LWYI), 47 to 67 (VTLT…CLLF), 84 to 104 (VLYT…FGSL), 109 to 129 (IPVS…VLAY), 136 to 156 (VYSA…TLAC), 164 to 184 (IVGL…NIFG), 205 to 225 (LNLL…VWLY), 255 to 275 (ILAF…ASLI), and 278 to 298 (IFVI…TQGS). Phosphoserine is present on residues S348 and S352. Y355 carries the phosphotyrosine modification. Residues 382-415 (NSVYSNEGVTSSVSGNATPASVRQSTQNDFSNSN) are compositionally biased toward polar residues. The segment at 382–416 (NSVYSNEGVTSSVSGNATPASVRQSTQNDFSNSNI) is disordered.

Belongs to the TPT transporter family.

The protein localises to the membrane. The protein is Putative transporter C83.11 of Schizosaccharomyces pombe (strain 972 / ATCC 24843) (Fission yeast).